Consider the following 1713-residue polypeptide: Serine/threonine-protein kinase MRCK beta (1713 aa).

A Protein kinase domain is found at 76–342; the sequence is FEIIKVIGRG…IEDFKKHAFF (267 aa). Residues 82 to 90 and Lys105 each bind ATP; that span reads IGRGAFGEV. The active-site Proton acceptor is Asp200. 2 positions are modified to phosphoserine; by autocatalysis: Ser221 and Ser233. Thr239 bears the Phosphothreonine; by autocatalysis mark. Residues 343–413 enclose the AGC-kinase C-terminal domain; sequence EGLNWENIRN…TTESCFSDRG (71 aa). Phosphothreonine is present on Thr423. The stretch at 434-649 forms a coiled coil; it reads LENSLQIEAY…ASKERKLREH (216 aa). An Omega-N-methylarginine modification is found at Arg671. 2 coiled-coil regions span residues 681 to 815 and 878 to 939; these read QEIS…AHWE and ELQS…FRAD. Ser927 is modified (phosphoserine). Tyr954 carries the post-translational modification Phosphotyrosine. The segment covering 971-994 has biased composition (polar residues); that stretch reads ASDQETQASKMDLSPSVSVATSTE. The interval 971 to 1022 is disordered; sequence ASDQETQASKMDLSPSVSVATSTEQQEDMARPQQRPSPVPLPSTQALAMAGP. The segment at 1026-1076 adopts a Phorbol-ester/DAG-type zinc-finger fold; sequence AHQFSIKSFPSPTQCSHCTSLMVGLIRQGYACEVCAFSCHVSCKDSAPQVC. The 120-residue stretch at 1096 to 1215 folds into the PH domain; the sequence is GTAYKGYVKV…WVGILEGLQA (120 aa). The CNH domain maps to 1241 to 1515; that stretch reads IKAVLAAAIV…RPLNSDGSLN (275 aa). The CRIB domain occupies 1585 to 1598; sequence ISNPTNFNHVAHMG. Residues 1616–1713 are disordered; sequence TVQEEKQGPT…EGLDQPSCDA (98 aa). Residues 1666–1677 show a composition bias toward basic and acidic residues; it reads DFDKEPDSDSTK. A phosphoserine mark is found at Ser1682, Ser1684, Ser1688, Ser1692, and Ser1695.

This sequence belongs to the protein kinase superfamily. AGC Ser/Thr protein kinase family. DMPK subfamily. Homodimer and homotetramer via the coiled coil regions. Interacts tightly with GTP-bound but not GDP-bound CDC42. Interacts with TJP1; this interaction requires the presence of catalytically active CDC42. Forms a tripartite complex with MYO18A and LURAP1 with the latter acting as an adapter connecting CDC42BPB and MYO18A. LURAP1 binding results in activation of CDC42BPB by abolition of its negative autoregulation. Interacts with STRIP1, STRN3 and SIKE1. Interacts with CPNE4 (via VWFA domain). Interacts with LURAP1. Interacts (via AGC-kinase C-terminal domain) with FAM89B/LRAP25 (via LRR repeat). Forms a tripartite complex with FAM89B/LRAP25 and LIMK1. It depends on Mg(2+) as a cofactor. Proteolytically cleaved by caspases upon apoptosis induction.

The protein localises to the cytoplasm. Its subcellular location is the cell membrane. It is found in the cell junction. It localises to the cell projection. The protein resides in the lamellipodium. It catalyses the reaction L-seryl-[protein] + ATP = O-phospho-L-seryl-[protein] + ADP + H(+). The catalysed reaction is L-threonyl-[protein] + ATP = O-phospho-L-threonyl-[protein] + ADP + H(+). Maintained in an inactive, closed conformation by an interaction between the kinase domain and the negative autoregulatory C-terminal coiled-coil region. Agonist binding to the phorbol ester binding site disrupts this, releasing the kinase domain to allow N-terminus-mediated dimerization and kinase activation by transautophosphorylation. Inhibited by chelerythrine chloride. Its function is as follows. Serine/threonine-protein kinase which is an important downstream effector of CDC42 and plays a role in the regulation of cytoskeleton reorganization and cell migration. Regulates actin cytoskeletal reorganization via phosphorylation of PPP1R12C and MYL9/MLC2. In concert with MYO18A and LURAP1, is involved in modulating lamellar actomyosin retrograde flow that is crucial to cell protrusion and migration. Phosphorylates PPP1R12A. In concert with FAM89B/LRAP25 mediates the targeting of LIMK1 to the lamellipodium resulting in its activation and subsequent phosphorylation of CFL1 which is important for lamellipodial F-actin regulation. The chain is Serine/threonine-protein kinase MRCK beta from Mus musculus (Mouse).